Consider the following 542-residue polypeptide: CTP synthase (542 aa).

The interval 1 to 265 (MTRYVFITGG…DREVLALFGI (265 aa)) is amidoligase domain. Residue Ser13 coordinates CTP. A UTP-binding site is contributed by Ser13. ATP-binding positions include 14 to 19 (SLGKGL) and Asp71. Mg(2+) contacts are provided by Asp71 and Glu139. Residues 146–148 (DIE), 186–191 (KTKPTQ), and Lys222 contribute to the CTP site. Residues 186–191 (KTKPTQ) and Lys222 each bind UTP. 238-240 (RDV) is a binding site for ATP. Residues 291–541 (SIAIVGKYTG…IGAAVVQSRL (251 aa)) form the Glutamine amidotransferase type-1 domain. Position 353 (Gly353) interacts with L-glutamine. The active-site Nucleophile; for glutamine hydrolysis is Cys380. L-glutamine contacts are provided by residues 381 to 384 (FGMQ), Glu404, and Arg469. Active-site residues include His514 and Glu516.

The protein belongs to the CTP synthase family. As to quaternary structure, homotetramer.

The catalysed reaction is UTP + L-glutamine + ATP + H2O = CTP + L-glutamate + ADP + phosphate + 2 H(+). It catalyses the reaction L-glutamine + H2O = L-glutamate + NH4(+). It carries out the reaction UTP + NH4(+) + ATP = CTP + ADP + phosphate + 2 H(+). The protein operates within pyrimidine metabolism; CTP biosynthesis via de novo pathway; CTP from UDP: step 2/2. Allosterically activated by GTP, when glutamine is the substrate; GTP has no effect on the reaction when ammonia is the substrate. The allosteric effector GTP functions by stabilizing the protein conformation that binds the tetrahedral intermediate(s) formed during glutamine hydrolysis. Inhibited by the product CTP, via allosteric rather than competitive inhibition. Catalyzes the ATP-dependent amination of UTP to CTP with either L-glutamine or ammonia as the source of nitrogen. Regulates intracellular CTP levels through interactions with the four ribonucleotide triphosphates. This chain is CTP synthase, found in Methylobacterium nodulans (strain LMG 21967 / CNCM I-2342 / ORS 2060).